Consider the following 317-residue polypeptide: DNA-directed RNA polymerase subunit alpha 2 (317 aa).

Residues 1–227 (MALENLLHPT…NQLRNIVDIE (227 aa)) are alpha N-terminal domain (alpha-NTD). Residues 241–317 (INPILLKHVE…TLIENWPQDL (77 aa)) are alpha C-terminal domain (alpha-CTD).

This sequence belongs to the RNA polymerase alpha chain family. Homodimer. The RNAP catalytic core consists of 2 alpha, 1 beta, 1 beta' and 1 omega subunit. When a sigma factor is associated with the core the holoenzyme is formed, which can initiate transcription.

It carries out the reaction RNA(n) + a ribonucleoside 5'-triphosphate = RNA(n+1) + diphosphate. DNA-dependent RNA polymerase catalyzes the transcription of DNA into RNA using the four ribonucleoside triphosphates as substrates. This is DNA-directed RNA polymerase subunit alpha 2 from Francisella tularensis subsp. holarctica (strain FTNF002-00 / FTA).